The following is a 103-amino-acid chain: Small ribosomal subunit protein uS10 (103 aa).

It belongs to the universal ribosomal protein uS10 family. In terms of assembly, part of the 30S ribosomal subunit.

Involved in the binding of tRNA to the ribosomes. The chain is Small ribosomal subunit protein uS10 from Campylobacter hominis (strain ATCC BAA-381 / DSM 21671 / CCUG 45161 / LMG 19568 / NCTC 13146 / CH001A).